A 266-amino-acid chain; its full sequence is Tryptophan synthase alpha chain (266 aa).

Catalysis depends on proton acceptor residues E47 and D58.

It belongs to the TrpA family. As to quaternary structure, tetramer of two alpha and two beta chains.

It catalyses the reaction (1S,2R)-1-C-(indol-3-yl)glycerol 3-phosphate + L-serine = D-glyceraldehyde 3-phosphate + L-tryptophan + H2O. Its pathway is amino-acid biosynthesis; L-tryptophan biosynthesis; L-tryptophan from chorismate: step 5/5. Its function is as follows. The alpha subunit is responsible for the aldol cleavage of indoleglycerol phosphate to indole and glyceraldehyde 3-phosphate. The protein is Tryptophan synthase alpha chain of Leptospira biflexa serovar Patoc (strain Patoc 1 / Ames).